The sequence spans 187 residues: Cytochrome b-245 chaperone 1 (187 aa).

The chain crosses the membrane as a helical span at residues 20–42 (GIRSWSLLVGILSIGLAAAYYSG). Phosphoserine is present on Ser-168.

Belongs to the CYBC1 family. Interacts with CYBB; CYBC1 may act as a chaperone stabilizing Cytochrome b-245 heterodimer. As to expression, highly expressed in macrophages, neutrophils and monocytes.

The protein resides in the endoplasmic reticulum membrane. In terms of biological role, functions as a chaperone necessary for a stable expression of the CYBA and CYBB subunits of the cytochrome b-245 heterodimer. Controls the phagocyte respiratory burst and is essential for innate immunity. This chain is Cytochrome b-245 chaperone 1, found in Homo sapiens (Human).